The chain runs to 300 residues: uncharacterized protein (300 aa).

The protein belongs to the histone deacetylase family.

In terms of biological role, putative deacetylase. This is an uncharacterized protein from Picosynechococcus sp. (strain ATCC 27264 / PCC 7002 / PR-6) (Agmenellum quadruplicatum).